The sequence spans 160 residues: Small ribosomal subunit protein uS7 (160 aa).

Belongs to the universal ribosomal protein uS7 family. In terms of assembly, part of the 30S ribosomal subunit. Contacts proteins S9 and S11.

In terms of biological role, one of the primary rRNA binding proteins, it binds directly to 16S rRNA where it nucleates assembly of the head domain of the 30S subunit. Is located at the subunit interface close to the decoding center, probably blocks exit of the E-site tRNA. The polypeptide is Small ribosomal subunit protein uS7 (Anaplasma phagocytophilum (strain HZ)).